A 193-amino-acid chain; its full sequence is 2',3'-cyclic-nucleotide 3'-phosphodiesterase (193 aa).

H40 serves as the catalytic Proton donor/acceptor. T42 contributes to the substrate binding site. H129 (proton donor/acceptor) is an active-site residue. S131 and Y134 together coordinate substrate.

It belongs to the 2H phosphoesterase superfamily. CPD1 family.

The protein localises to the golgi apparatus. It catalyses the reaction a nucleoside 2',3'-cyclic phosphate + H2O = a nucleoside 2'-phosphate + H(+). Its function is as follows. Involved in the metabolism of ADP-ribose 1',2'-cyclic phosphate which is produced as a consequence of tRNA splicing. In Phaeosphaeria nodorum (strain SN15 / ATCC MYA-4574 / FGSC 10173) (Glume blotch fungus), this protein is 2',3'-cyclic-nucleotide 3'-phosphodiesterase (CPD1).